The primary structure comprises 1274 residues: DENN domain-containing protein 5B (1274 aa).

At Ser-2 the chain carries N-acetylserine. In terms of domain architecture, uDENN spans 39–244 (DELAGENFDQ…EVPLPPPGRS (206 aa)). Phosphoserine occurs at positions 49 and 178. Residues 263–399 (ELPLSDYPLR…VDFIQELSEV (137 aa)) enclose the cDENN domain. Residues 401 to 581 (VQFGIPPEGS…DNKIMSQWEE (181 aa)) form the dDENN domain. In terms of domain architecture, RUN 1 spans 772–932 (LEENTLIASL…DYFCFTSVFT (161 aa)). Position 822 is a phosphoserine (Ser-822). Residues 916–936 (LLSLNAVDYFCFTSVFTTIMI) form a helical membrane-spanning segment. One can recognise a PLAT domain in the interval 936–1044 (IPYRSVIIPI…DDGSLERILI (109 aa)). Thr-1062 is subject to Phosphothreonine. Phosphoserine occurs at positions 1068, 1076, and 1079. The RUN 2 domain occupies 1118–1267 (TVLLCGENGL…QDFTIVLEGS (150 aa)).

It belongs to the RAB6IP1 family.

The protein resides in the membrane. Its function is as follows. Guanine nucleotide exchange factor (GEF) which may activate RAB39A and/or RAB39B. Promotes the exchange of GDP to GTP, converting inactive GDP-bound Rab proteins into their active GTP-bound form. This is DENN domain-containing protein 5B (DENND5B) from Homo sapiens (Human).